We begin with the raw amino-acid sequence, 129 residues long: Small ribosomal subunit protein uS8 (129 aa).

It belongs to the universal ribosomal protein uS8 family. Part of the 30S ribosomal subunit.

Its function is as follows. One of the primary rRNA binding proteins, it binds directly to 16S rRNA central domain where it helps coordinate assembly of the platform of the 30S subunit. This Methanothrix thermoacetophila (strain DSM 6194 / JCM 14653 / NBRC 101360 / PT) (Methanosaeta thermophila) protein is Small ribosomal subunit protein uS8.